A 294-amino-acid polypeptide reads, in one-letter code: Syntaxin-19 (294 aa).

The t-SNARE coiled-coil homology domain occupies 209-271 (LSEIEQRHKE…NNTKEKFGLA (63 aa)).

This sequence belongs to the syntaxin family. In terms of assembly, interacts with EGFR.

It is found in the cell membrane. The protein localises to the cytoplasm. Plays a role in endosomal trafficking of the epidermal growth factor receptor (EGFR). This Pongo abelii (Sumatran orangutan) protein is Syntaxin-19 (STX19).